The chain runs to 921 residues: Isoleucine--tRNA ligase 1 (921 aa).

The short motif at 57 to 67 (PYANGDIHMGH) is the 'HIGH' region element. Glutamate 552 is a binding site for L-isoleucyl-5'-AMP. Residues 593–597 (KMSKS) carry the 'KMSKS' region motif. ATP is bound at residue lysine 596. Cysteine 888, cysteine 891, cysteine 908, and cysteine 911 together coordinate Zn(2+).

The protein belongs to the class-I aminoacyl-tRNA synthetase family. IleS type 1 subfamily. As to quaternary structure, monomer. It depends on Zn(2+) as a cofactor.

Its subcellular location is the cytoplasm. It carries out the reaction tRNA(Ile) + L-isoleucine + ATP = L-isoleucyl-tRNA(Ile) + AMP + diphosphate. Its function is as follows. Catalyzes the attachment of isoleucine to tRNA(Ile). As IleRS can inadvertently accommodate and process structurally similar amino acids such as valine, to avoid such errors it has two additional distinct tRNA(Ile)-dependent editing activities. One activity is designated as 'pretransfer' editing and involves the hydrolysis of activated Val-AMP. The other activity is designated 'posttransfer' editing and involves deacylation of mischarged Val-tRNA(Ile). This Bacillus cereus (strain ZK / E33L) protein is Isoleucine--tRNA ligase 1.